A 274-amino-acid chain; its full sequence is Type III pantothenate kinase (274 aa).

6-13 (DVGNTNTV) serves as a coordination point for ATP. Residues Y110 and 117–120 (GADR) contribute to the substrate site. Catalysis depends on D119, which acts as the Proton acceptor. D139 provides a ligand contact to K(+). T142 is a binding site for ATP. T194 is a substrate binding site.

The protein belongs to the type III pantothenate kinase family. As to quaternary structure, homodimer. The cofactor is NH4(+). Requires K(+) as cofactor.

The protein localises to the cytoplasm. The catalysed reaction is (R)-pantothenate + ATP = (R)-4'-phosphopantothenate + ADP + H(+). It functions in the pathway cofactor biosynthesis; coenzyme A biosynthesis; CoA from (R)-pantothenate: step 1/5. Catalyzes the phosphorylation of pantothenate (Pan), the first step in CoA biosynthesis. The polypeptide is Type III pantothenate kinase (Koribacter versatilis (strain Ellin345)).